A 254-amino-acid chain; its full sequence is Leucyl/phenylalanyl-tRNA--protein transferase (254 aa).

Belongs to the L/F-transferase family.

Its subcellular location is the cytoplasm. The enzyme catalyses N-terminal L-lysyl-[protein] + L-leucyl-tRNA(Leu) = N-terminal L-leucyl-L-lysyl-[protein] + tRNA(Leu) + H(+). It carries out the reaction N-terminal L-arginyl-[protein] + L-leucyl-tRNA(Leu) = N-terminal L-leucyl-L-arginyl-[protein] + tRNA(Leu) + H(+). It catalyses the reaction L-phenylalanyl-tRNA(Phe) + an N-terminal L-alpha-aminoacyl-[protein] = an N-terminal L-phenylalanyl-L-alpha-aminoacyl-[protein] + tRNA(Phe). Its function is as follows. Functions in the N-end rule pathway of protein degradation where it conjugates Leu, Phe and, less efficiently, Met from aminoacyl-tRNAs to the N-termini of proteins containing an N-terminal arginine or lysine. This Burkholderia multivorans (strain ATCC 17616 / 249) protein is Leucyl/phenylalanyl-tRNA--protein transferase.